Consider the following 185-residue polypeptide: Large ribosomal subunit protein uL16m (185 aa).

The protein belongs to the universal ribosomal protein uL16 family.

The protein resides in the mitochondrion. This is Large ribosomal subunit protein uL16m (RPL16) from Oryza sativa subsp. japonica (Rice).